The sequence spans 157 residues: Oocyte zinc finger protein XlCOF2 (157 aa).

C2H2-type zinc fingers lie at residues 6 to 28 (FTCT…MRIH), 34 to 56 (YSCA…QKNP), 79 to 101 (FTCT…QRLH), 107 to 129 (FSCA…QNTH), and 135 to 157 (FTCT…QKIH).

Belongs to the krueppel C2H2-type zinc-finger protein family.

Its subcellular location is the nucleus. Functionally, may be involved in transcriptional regulation. The chain is Oocyte zinc finger protein XlCOF2 from Xenopus laevis (African clawed frog).